We begin with the raw amino-acid sequence, 260 residues long: UPF0246 protein Bamb_2261 (260 aa).

This sequence belongs to the UPF0246 family.

In Burkholderia ambifaria (strain ATCC BAA-244 / DSM 16087 / CCUG 44356 / LMG 19182 / AMMD) (Burkholderia cepacia (strain AMMD)), this protein is UPF0246 protein Bamb_2261.